The following is a 460-amino-acid chain: Pyruvate dehydrogenase E1 component subunit beta (460 aa).

Residues 2–78 (PVEILMPALS…KVNTPIAVLL (77 aa)) enclose the Lipoyl-binding domain. N6-lipoyllysine is present on K43. The tract at residues 91 to 131 (KTEAPKAETPKPAAAEAPAASAAPVAAQPKADVPSDPAIPA) is disordered. Residues 100-121 (PKPAAAEAPAASAAPVAAQPKA) are compositionally biased toward low complexity. Residue E194 coordinates thiamine diphosphate.

As to quaternary structure, heterodimer of an alpha and a beta chain. The cofactor is (R)-lipoate. Thiamine diphosphate is required as a cofactor.

It catalyses the reaction N(6)-[(R)-lipoyl]-L-lysyl-[protein] + pyruvate + H(+) = N(6)-[(R)-S(8)-acetyldihydrolipoyl]-L-lysyl-[protein] + CO2. The pyruvate dehydrogenase complex catalyzes the overall conversion of pyruvate to acetyl-CoA and CO(2). It contains multiple copies of three enzymatic components: pyruvate dehydrogenase (E1), dihydrolipoamide acetyltransferase (E2) and lipoamide dehydrogenase (E3). The polypeptide is Pyruvate dehydrogenase E1 component subunit beta (pdhB) (Rhizobium meliloti (strain 1021) (Ensifer meliloti)).